The primary structure comprises 472 residues: Ras-GEF domain-containing family member 1B (472 aa).

The 131-residue stretch at 34–164 folds into the N-terminal Ras-GEF domain; the sequence is HDNNLLSGSL…MIQCLIRKLA (131 aa). The Ras-GEF domain occupies 204–452; sequence DPYTLAQQLT…YLASYESEGP (249 aa).

Interacts with CCDC124 during cytokinesis. Interacts with Ras family proteins.

The protein resides in the early endosome. Its subcellular location is the late endosome. It is found in the midbody. Its function is as follows. Guanine nucleotide exchange factor (GEF) with specificity for RAP2A, it doesn't seems to activate other Ras family proteins (in vitro). The chain is Ras-GEF domain-containing family member 1B (RASGEF1B) from Bos taurus (Bovine).